We begin with the raw amino-acid sequence, 287 residues long: Undecaprenyl-diphosphatase (287 aa).

7 consecutive transmembrane segments (helical) span residues 6–26 (LHLLKAFFLGIVEGLTEFIPV), 45–65 (SGKVFEVVIQFGSILAVMWIF), 89–109 (NLLLAFLPAAVIGAIFIKSIK), 111–131 (VFYHPGVVAVTLVVGGFIMLW), 204–224 (ATEFSFFLAMPTMLGAAVYDL), 238–258 (AIAVGFVAAFLSALVVVRAVL), and 266–286 (YRVFAWYRIALGLVVAAWIYA).

Belongs to the UppP family.

It is found in the cell inner membrane. The catalysed reaction is di-trans,octa-cis-undecaprenyl diphosphate + H2O = di-trans,octa-cis-undecaprenyl phosphate + phosphate + H(+). In terms of biological role, catalyzes the dephosphorylation of undecaprenyl diphosphate (UPP). Confers resistance to bacitracin. This is Undecaprenyl-diphosphatase from Bordetella pertussis (strain Tohama I / ATCC BAA-589 / NCTC 13251).